The sequence spans 136 residues: UPF0225 protein Pnap_0466 (136 aa).

The protein belongs to the UPF0225 family.

This is UPF0225 protein Pnap_0466 from Polaromonas naphthalenivorans (strain CJ2).